The sequence spans 161 residues: Nucleotide-binding protein Mmc1_1670 (161 aa).

The protein belongs to the YajQ family.

Its function is as follows. Nucleotide-binding protein. This Magnetococcus marinus (strain ATCC BAA-1437 / JCM 17883 / MC-1) protein is Nucleotide-binding protein Mmc1_1670.